An 82-amino-acid chain; its full sequence is Cytochrome b559 subunit alpha (82 aa).

A helical membrane pass occupies residues 21–35 (VIHSITVPALFIAGW). Histidine 23 contributes to the heme binding site.

The protein belongs to the PsbE/PsbF family. Heterodimer of an alpha subunit and a beta subunit. PSII is composed of 1 copy each of membrane proteins PsbA, PsbB, PsbC, PsbD, PsbE, PsbF, PsbH, PsbI, PsbJ, PsbK, PsbL, PsbM, PsbT, PsbX, PsbY, PsbZ, Psb30/Ycf12, at least 3 peripheral proteins of the oxygen-evolving complex and a large number of cofactors. It forms dimeric complexes. It depends on heme b as a cofactor.

Its subcellular location is the plastid. The protein localises to the chloroplast thylakoid membrane. Its function is as follows. This b-type cytochrome is tightly associated with the reaction center of photosystem II (PSII). PSII is a light-driven water:plastoquinone oxidoreductase that uses light energy to abstract electrons from H(2)O, generating O(2) and a proton gradient subsequently used for ATP formation. It consists of a core antenna complex that captures photons, and an electron transfer chain that converts photonic excitation into a charge separation. The sequence is that of Cytochrome b559 subunit alpha from Chlamydomonas reinhardtii (Chlamydomonas smithii).